The primary structure comprises 262 residues: Tritrans,polycis-undecaprenyl-diphosphate synthase (geranylgeranyl-diphosphate specific) (262 aa).

Aspartate 40 is a catalytic residue. Residue aspartate 40 participates in Mg(2+) binding. Substrate is bound by residues 41-44 (GNRR), tryptophan 45, and 85-87 (STE). Asparagine 88 serves as the catalytic Proton acceptor. Substrate is bound by residues arginine 92, arginine 211, and 217 to 219 (RIS). Mg(2+) is bound at residue glutamate 230.

It belongs to the UPP synthase family. As to quaternary structure, homodimer. The cofactor is Mg(2+).

The catalysed reaction is geranylgeranyl diphosphate + 7 isopentenyl diphosphate = tri-trans,hepta-cis-undecaprenyl diphosphate + 7 diphosphate. Its function is as follows. Catalyzes the sequential condensation of isopentenyl diphosphate (IPP) with geranylgeranyl diphosphate (GGPP) to yield (2Z,6Z,10Z,14Z,18Z,22Z,26Z,30E,34E,38E)-undecaprenyl diphosphate (tritrans,heptacis-UPP). It is probably the precursor of glycosyl carrier lipids. The sequence is that of Tritrans,polycis-undecaprenyl-diphosphate synthase (geranylgeranyl-diphosphate specific) from Sulfurisphaera tokodaii (strain DSM 16993 / JCM 10545 / NBRC 100140 / 7) (Sulfolobus tokodaii).